A 664-amino-acid chain; its full sequence is DCC-interacting protein 13-beta (664 aa).

Positions 1–428 (MPAVDKLLLE…NSEMENENDK (428 aa)) are required for RAB5A binding. In terms of domain architecture, BAR spans 3 to 268 (AVDKLLLEEA…ESVYTPDSDV (266 aa)). In terms of domain architecture, PH spans 277–375 (LIQKAGYLNL…WICAINNISR (99 aa)). Residues 488–637 (SLLQQMFIVR…LMLSIPLTND (150 aa)) enclose the PID domain. A disordered region spans residues 643–664 (LNDQPDDDDGNPNEHRGAESEA). Over residues 654-664 (PNEHRGAESEA) the composition is skewed to basic and acidic residues.

In terms of assembly, homodimer. Homotetramer. Binds RAB5A/Rab5 through an N-terminal domain. This interaction is essential for its recruitment to endosomal membranes as well as its role in cell proliferation. Binds subunits of the NuRD/MeCP1 complex. Interacts with FSHR; interaction is independent of follicle stimulating hormone stimulation. Interacts with APPL1; the interaction is decreased by adiponectin in a time-dependent manner. Forms a complex comprising APPL1, RUVBL2, CTNNB1, HDAC1 and HDAC2; interaction reduces interaction between CTNNB1, HDAC1, HDAC2 and RUVBL2 leading to the decrease of deacetylase activity of this complex; affects the recruitment of repressive complexes to the Wnt target genes. Interacts (via BAR domain) with TBC1D1; interaction is dependent of TBC1D1 phosphorylation at 'Ser-235'; interaction diminishes the phosphorylation of TBC1D1 at 'Thr-596', resulting in inhibition of SLC2A4 translocation and glucose uptake. Interacts with ANXA2; targets APPL2 to endosomes and acting in parallel to RAB5A. Interacts with RAB31 (in GTP-bound form); interaction contributes to or enhances recruitment of APPL2 to the phagosomes; interaction enhances Fc-gamma receptor-mediated phagocytosis through PI3K/Akt signaling in macrophages. Interacts with PIK3R1; forms a complex with PIK3R1 and APPL1. Interacts (via BAR domain) with ADIPOR1; hinders the accessibility of APPL1 to ADIPOR1; negatively regulates adiponectin signaling; ADIPOQ dissociates this interaction and facilitates the recruitment of APPL1 to ADIPOR1. Interacts (via BAR domain) with ADIPOR2; ADIPOQ dissociates this interaction. As to expression, high levels in brain, heart, kidney and skeletal muscle.

The protein localises to the early endosome membrane. It is found in the nucleus. Its subcellular location is the cell membrane. The protein resides in the endosome membrane. It localises to the cytoplasm. The protein localises to the cytoplasmic vesicle. It is found in the phagosome. Its subcellular location is the cell projection. The protein resides in the ruffle. It localises to the ruffle membrane. The protein localises to the phagosome membrane. Functionally, multifunctional adapter protein that binds to various membrane receptors, nuclear factors and signaling proteins to regulate many processes, such as cell proliferation, immune response, endosomal trafficking and cell metabolism. Regulates signaling pathway leading to cell proliferation through interaction with RAB5A and subunits of the NuRD/MeCP1 complex. Plays a role in immune response by modulating phagocytosis, inflammatory and innate immune responses. In macrophages, enhances Fc-gamma receptor-mediated phagocytosis through interaction with RAB31 leading to activation of PI3K/Akt signaling. In response to LPS, modulates inflammatory responses by playing a key role on the regulation of TLR4 signaling and in the nuclear translocation of RELA/NF-kappa-B p65 and the secretion of pro- and anti-inflammatory cytokines. Also functions as a negative regulator of innate immune response via inhibition of AKT1 signaling pathway by forming a complex with APPL1 and PIK3R1. Plays a role in endosomal trafficking of TGFBR1 from the endosomes to the nucleus. Plays a role in cell metabolism by regulating adiponecting ans insulin signaling pathways and adaptative thermogenesis. In muscle, negatively regulates adiponectin-simulated glucose uptake and fatty acid oxidation by inhibiting adiponectin signaling pathway through APPL1 sequestration thereby antagonizing APPL1 action. In muscles, negatively regulates insulin-induced plasma membrane recruitment of GLUT4 and glucose uptake through interaction with TBC1D1. Plays a role in cold and diet-induced adaptive thermogenesis by activating ventromedial hypothalamus (VMH) neurons throught AMPK inhibition which enhances sympathetic outflow to subcutaneous white adipose tissue (sWAT), sWAT beiging and cold tolerance. Also plays a role in other signaling pathways namely Wnt/beta-catenin, HGF and glucocorticoid receptor signaling. Positive regulator of beta-catenin/TCF-dependent transcription through direct interaction with RUVBL2/reptin resulting in the relief of RUVBL2-mediated repression of beta-catenin/TCF target genes by modulating the interactions within the beta-catenin-reptin-HDAC complex. May affect adult neurogenesis in hippocampus and olfactory system via regulating the sensitivity of glucocorticoid receptor. Required for fibroblast migration through HGF cell signaling. The sequence is that of DCC-interacting protein 13-beta from Homo sapiens (Human).